The sequence spans 139 residues: Putative pre-16S rRNA nuclease (139 aa).

The protein belongs to the YqgF nuclease family.

The protein resides in the cytoplasm. Functionally, could be a nuclease involved in processing of the 5'-end of pre-16S rRNA. This chain is Putative pre-16S rRNA nuclease, found in Dictyoglomus thermophilum (strain ATCC 35947 / DSM 3960 / H-6-12).